The chain runs to 310 residues: Carbamate kinase 1 (310 aa).

It belongs to the carbamate kinase family.

Its subcellular location is the cytoplasm. It carries out the reaction hydrogencarbonate + NH4(+) + ATP = carbamoyl phosphate + ADP + H2O + H(+). Its pathway is metabolic intermediate metabolism; carbamoyl phosphate degradation; CO(2) and NH(3) from carbamoyl phosphate: step 1/1. The chain is Carbamate kinase 1 (arcC1) from Staphylococcus aureus (strain bovine RF122 / ET3-1).